The following is a 313-amino-acid chain: Ribosomal protein L11 methyltransferase (313 aa).

The S-adenosyl-L-methionine site is built by T161, G182, D204, and N247.

The protein belongs to the methyltransferase superfamily. PrmA family.

It is found in the cytoplasm. It catalyses the reaction L-lysyl-[protein] + 3 S-adenosyl-L-methionine = N(6),N(6),N(6)-trimethyl-L-lysyl-[protein] + 3 S-adenosyl-L-homocysteine + 3 H(+). Methylates ribosomal protein L11. This Alkaliphilus oremlandii (strain OhILAs) (Clostridium oremlandii (strain OhILAs)) protein is Ribosomal protein L11 methyltransferase.